The chain runs to 107 residues: Cysteine proteinase inhibitor (107 aa).

One can recognise a Cystatin domain in the interval 18–107 (GGVQDAPAGR…KQLQEFKPAA (90 aa)). The Secondary area of contact signature appears at 63–67 (QVVAG).

The protein belongs to the cystatin family. Phytocystatin subfamily. As to expression, expressed in embryos, developing endosperms, leaves, roots, flowers and pollen grains.

Its function is as follows. Inhibits papain, ficin, cathepsin B and, to a lesser extent, chymopapain, but is inactive against bromelain. Inhibits the growth of pathogenic fungi. Regulated by the DOF transcription factors SAD (activator) and BPBF (repressor). This chain is Cysteine proteinase inhibitor (ICY), found in Hordeum vulgare (Barley).